The chain runs to 235 residues: BPI fold-containing family A member 2 (235 aa).

The signal sequence occupies residues 1–20 (MFQLGSLVVLCGLLIGTSES). Residues cysteine 161 and cysteine 204 are joined by a disulfide bond.

This sequence belongs to the BPI/LBP/Plunc superfamily. Plunc family. Expressed in parotid, submandibular and sublingual glands.

The protein localises to the secreted. Its function is as follows. Has strong antibacterial activity against P.aeruginosa. This chain is BPI fold-containing family A member 2 (Bpifa2), found in Rattus norvegicus (Rat).